Reading from the N-terminus, the 364-residue chain is Lysophosphatidic acid receptor 1 (364 aa).

Residues 1–50 (MAAAFTSSPVVSQPQFTAMNEQQCFSNESIAFFYNRSGKYLATEWNTVTK) lie on the Extracellular side of the membrane. Cystine bridges form between Cys24-Cys190 and Cys188-Cys195. Asn27 and Asn35 each carry an N-linked (GlcNAc...) asparagine glycan. Lys39 lines the a 1-acyl-sn-glycero-3-phosphate pocket. A helical membrane pass occupies residues 51–75 (LVMGLGITVCIFIMLANLLVMVAIY). Residues 76–83 (VNRRFHFP) are Cytoplasmic-facing. Residues 84 to 107 (IYYLMANLAAADFFAGLAYFYLMF) traverse the membrane as a helical segment. Over 108-121 (NTGPNTRRLTVSTW) the chain is Extracellular. Residues 122–144 (LLRQGLIDTSLTVSVANLLAIAI) form a helical membrane-spanning segment. 124–129 (RQGLID) lines the a 1-acyl-sn-glycero-3-phosphate pocket. Residues 145 to 163 (ERHITVFRMQLHARMSNRR) are Cytoplasmic-facing. A helical membrane pass occupies residues 164–184 (VVVVIVVIWTMAIVMGAIPSV). At 185-204 (GWNCICDIENCSNMAPLYSD) the chain is on the extracellular side. Residues 205 to 225 (SYLVFWAIFNLVTFVVMVVLY) traverse the membrane as a helical segment. Trp210 contributes to the a 1-acyl-sn-glycero-3-phosphate binding site. Residues 226-255 (AHIFGYVRQRTMRMSRHSSGPRRNRDTMMS) lie on the Cytoplasmic side of the membrane. A helical membrane pass occupies residues 256 to 280 (LLKTVVIVLGAFIICWTPGLVLLLL). The Extracellular segment spans residues 281–294 (DVCCPQCDVLAYEK). Cys284 and Cys287 form a disulfide bridge. The chain crosses the membrane as a helical span at residues 295–315 (FFLLLAEFNSAMNPIIYSYRD). Over 316 to 364 (KEMSATFRQILCCQRSENTSGPTEGSDRSASSLNHTILAGVHSNDHSVV) the chain is Cytoplasmic. The residue at position 341 (Ser341) is a Phosphoserine. Position 351 is a phosphothreonine (Thr351).

The protein belongs to the G-protein coupled receptor 1 family. As to quaternary structure, interacts with RALA and GRK2. Interacts with GNAQ and GNA13. Interacts with CD14; the interaction is enhanced by exposure to bacterial lipopolysaccharide (LPS). In terms of processing, N-glycosylated.

Its subcellular location is the cell surface. The protein resides in the cell membrane. It localises to the endosome. Its function is as follows. Receptor for lysophosphatidic acid (LPA). Plays a role in the reorganization of the actin cytoskeleton, cell migration, differentiation and proliferation, and thereby contributes to the responses to tissue damage and infectious agents. Activates downstream signaling cascades via the G(i)/G(o), G(12)/G(13), and G(q) families of heteromeric G proteins. Signaling inhibits adenylyl cyclase activity and decreases cellular cAMP levels. Signaling triggers an increase of cytoplasmic Ca(2+) levels. Activates RALA; this leads to the activation of phospholipase C (PLC) and the formation of inositol 1,4,5-trisphosphate. Signaling mediates activation of down-stream MAP kinases. Contributes to the regulation of cell shape. Promotes Rho-dependent reorganization of the actin cytoskeleton in neuronal cells and neurite retraction. Promotes the activation of Rho and the formation of actin stress fibers. Promotes formation of lamellipodia at the leading edge of migrating cells via activation of RAC1. Through its function as LPA receptor, plays a role in chemotaxis and cell migration, including responses to injury and wounding. Plays a role in triggering inflammation in response to bacterial lipopolysaccharide (LPS) via its interaction with CD14. Promotes cell proliferation in response to LPA. Inhibits the intracellular ciliogenesis pathway in response to LPA and through AKT1 activation. Required for normal skeleton development. May play a role in osteoblast differentiation. Required for normal brain development. Required for normal proliferation, survival and maturation of newly formed neurons in the adult dentate gyrus. Plays a role in pain perception and in the initiation of neuropathic pain. The polypeptide is Lysophosphatidic acid receptor 1 (LPAR1) (Bos taurus (Bovine)).